Consider the following 172-residue polypeptide: T-cell receptor gamma chain C region C7.5 (172 aa).

Positions 1–140 are c region; the sequence is DKKLDADISP…QFTITSAYYT (140 aa). A helical membrane pass occupies residues 141–160; the sequence is YLLLLLKSVIYLAIISFSLL. At 161-172 the chain is on the cytoplasmic side; sequence RRTSVCCNEKKS.

The protein localises to the membrane. The sequence is that of T-cell receptor gamma chain C region C7.5 from Mus musculus (Mouse).